The primary structure comprises 239 residues: Ribonuclease PH (239 aa).

Residues arginine 86 and 124–126 (GTR) contribute to the phosphate site.

It belongs to the RNase PH family. In terms of assembly, homohexameric ring arranged as a trimer of dimers.

It carries out the reaction tRNA(n+1) + phosphate = tRNA(n) + a ribonucleoside 5'-diphosphate. In terms of biological role, phosphorolytic 3'-5' exoribonuclease that plays an important role in tRNA 3'-end maturation. Removes nucleotide residues following the 3'-CCA terminus of tRNAs; can also add nucleotides to the ends of RNA molecules by using nucleoside diphosphates as substrates, but this may not be physiologically important. Probably plays a role in initiation of 16S rRNA degradation (leading to ribosome degradation) during starvation. In Rickettsia felis (strain ATCC VR-1525 / URRWXCal2) (Rickettsia azadi), this protein is Ribonuclease PH.